The sequence spans 259 residues: Putative zinc metalloprotease Rip2 (259 aa).

The next 2 helical transmembrane spans lie at 14–34 and 39–59; these read PIFL…WLAG and PLAY…SLCL. His-60 serves as a coordination point for Zn(2+). Glu-61 is an active-site residue. His-64 contributes to the Zn(2+) binding site. 4 consecutive transmembrane segments (helical) span residues 97 to 117, 128 to 148, 156 to 176, and 211 to 231; these read GLPM…AVYV, TLVS…LLAA, IHAV…TALV, and LVFL…FGVV.

Belongs to the peptidase M50B family. Zn(2+) is required as a cofactor.

The protein localises to the cell membrane. The chain is Putative zinc metalloprotease Rip2 (rip2) from Mycobacterium tuberculosis (strain ATCC 25618 / H37Rv).